A 404-amino-acid polypeptide reads, in one-letter code: L-cysteine:1D-myo-inositol 2-amino-2-deoxy-alpha-D-glucopyranoside ligase (404 aa).

Residue Cys-32 coordinates Zn(2+). Residues 32 to 35 (CGIT), Thr-47, and 70 to 72 (NIT) contribute to the L-cysteinyl-5'-AMP site. The 'HIGH' region motif lies at 34–44 (ITPYDSTHLGH). The 'ERGGDP' region signature appears at 176–181 (ERGGDP). Trp-216 provides a ligand contact to L-cysteinyl-5'-AMP. A Zn(2+)-binding site is contributed by Cys-220. 238 to 240 (GSD) provides a ligand contact to L-cysteinyl-5'-AMP. Residue His-245 coordinates Zn(2+). Residue Ile-272 coordinates L-cysteinyl-5'-AMP. A 'KMSKS' region motif is present at residues 278–282 (KMSKS).

This sequence belongs to the class-I aminoacyl-tRNA synthetase family. MshC subfamily. In terms of assembly, monomer. The cofactor is Zn(2+).

It catalyses the reaction 1D-myo-inositol 2-amino-2-deoxy-alpha-D-glucopyranoside + L-cysteine + ATP = 1D-myo-inositol 2-(L-cysteinylamino)-2-deoxy-alpha-D-glucopyranoside + AMP + diphosphate + H(+). Catalyzes the ATP-dependent condensation of GlcN-Ins and L-cysteine to form L-Cys-GlcN-Ins. In Corynebacterium glutamicum (strain ATCC 13032 / DSM 20300 / JCM 1318 / BCRC 11384 / CCUG 27702 / LMG 3730 / NBRC 12168 / NCIMB 10025 / NRRL B-2784 / 534), this protein is L-cysteine:1D-myo-inositol 2-amino-2-deoxy-alpha-D-glucopyranoside ligase (mshC).